Reading from the N-terminus, the 387-residue chain is Anhydro-N-acetylmuramic acid kinase (387 aa).

ATP is bound at residue 9–16 (GTSVDGID).

The protein belongs to the anhydro-N-acetylmuramic acid kinase family.

The enzyme catalyses 1,6-anhydro-N-acetyl-beta-muramate + ATP + H2O = N-acetyl-D-muramate 6-phosphate + ADP + H(+). Its pathway is amino-sugar metabolism; 1,6-anhydro-N-acetylmuramate degradation. The protein operates within cell wall biogenesis; peptidoglycan recycling. Functionally, catalyzes the specific phosphorylation of 1,6-anhydro-N-acetylmuramic acid (anhMurNAc) with the simultaneous cleavage of the 1,6-anhydro ring, generating MurNAc-6-P. Is required for the utilization of anhMurNAc either imported from the medium or derived from its own cell wall murein, and thus plays a role in cell wall recycling. This chain is Anhydro-N-acetylmuramic acid kinase, found in Synechocystis sp. (strain ATCC 27184 / PCC 6803 / Kazusa).